The primary structure comprises 255 residues: Indole-3-glycerol phosphate synthase (255 aa).

It belongs to the TrpC family.

The enzyme catalyses 1-(2-carboxyphenylamino)-1-deoxy-D-ribulose 5-phosphate + H(+) = (1S,2R)-1-C-(indol-3-yl)glycerol 3-phosphate + CO2 + H2O. Its pathway is amino-acid biosynthesis; L-tryptophan biosynthesis; L-tryptophan from chorismate: step 4/5. The sequence is that of Indole-3-glycerol phosphate synthase from Streptococcus pneumoniae (strain 70585).